The chain runs to 1088 residues: Tyrocidine synthase 1 (1088 aa).

Residues 528–602 (PPRTETESIL…QVALFVKSTT (75 aa)) enclose the Carrier domain. Residue Ser-563 is modified to O-(pantetheine 4'-phosphoryl)serine.

Belongs to the ATP-dependent AMP-binding enzyme family. Large multienzyme complex of TycA, TycB and TycC. Requires pantetheine 4'-phosphate as cofactor.

The enzyme catalyses L-phenylalanine + ATP + H2O = D-phenylalanine + AMP + diphosphate + H(+). Its pathway is antibiotic biosynthesis; tyrocidine biosynthesis. In terms of biological role, in the first step of peptide synthesis this enzyme activates phenylalanine and racemizes it to the D-isomer. The sequence is that of Tyrocidine synthase 1 (tycA) from Brevibacillus parabrevis.